A 58-amino-acid chain; its full sequence is Small ribosomal subunit protein bS21 (58 aa).

This sequence belongs to the bacterial ribosomal protein bS21 family.

The protein is Small ribosomal subunit protein bS21 of Lacticaseibacillus paracasei (strain ATCC 334 / BCRC 17002 / CCUG 31169 / CIP 107868 / KCTC 3260 / NRRL B-441) (Lactobacillus paracasei).